Here is a 605-residue protein sequence, read N- to C-terminus: Glutamine--fructose-6-phosphate aminotransferase [isomerizing] (605 aa).

The active-site Nucleophile; for GATase activity is Cys-2. One can recognise a Glutamine amidotransferase type-2 domain in the interval 2 to 216 (CGIVGIVGHQ…DGDWAVIGKT (215 aa)). 2 SIS domains span residues 280 to 420 (DSDA…ARGT) and 454 to 595 (LSRE…VDQP). Lys-600 functions as the For Fru-6P isomerization activity in the catalytic mechanism.

The protein resides in the cytoplasm. The catalysed reaction is D-fructose 6-phosphate + L-glutamine = D-glucosamine 6-phosphate + L-glutamate. Involved in the production of the root hair deformation (HAD) factor specifically on medicago. The chain is Glutamine--fructose-6-phosphate aminotransferase [isomerizing] (nodM) from Rhizobium meliloti (Ensifer meliloti).